A 111-amino-acid chain; its full sequence is Beta-2-microglobulin (111 aa).

The first 17 residues, 1 to 17 (MRALILLSLGLLRVAVP), serve as a signal peptide directing secretion. Positions 20-111 (PQVVVYTYKP…KTSIYKLESF (92 aa)) constitute an Ig-like C1-type domain.

It belongs to the beta-2-microglobulin family. Heterodimer of an alpha chain and a beta chain. Beta-2-microglobulin is the beta-chain of major histocompatibility complex class I molecules.

Its subcellular location is the secreted. In terms of biological role, component of the class I major histocompatibility complex (MHC). Involved in the presentation of peptide antigens to the immune system. This Rostroraja eglanteria (Clearnose skate) protein is Beta-2-microglobulin (b2m).